Here is a 680-residue protein sequence, read N- to C-terminus: Multisubstrate pseudouridine synthase 7 (680 aa).

2 stretches are compositionally biased toward basic and acidic residues: residues 1 to 30 (MSQE…RNGL) and 99 to 116 (ILSK…KDSS). Disordered stretches follow at residues 1 to 42 (MSQE…DLSG), 99 to 136 (ILSK…EPAT), and 206 to 229 (TKGN…RRDP). The span at 206-216 (TKGNGTFTVSK) shows a compositional bias: polar residues. The active-site Nucleophile is aspartate 277. The TRUD domain maps to 358 to 596 (GFINYFGLQR…PGDYRKLLVR (239 aa)).

It belongs to the pseudouridine synthase TruD family.

The protein resides in the nucleus. Its subcellular location is the cytoplasm. It catalyses the reaction uridine in 5S rRNA = pseudouridine in 5S rRNA. The catalysed reaction is uridine in snRNA = pseudouridine in snRNA. The enzyme catalyses uridine(13) in tRNA = pseudouridine(13) in tRNA. It carries out the reaction a uridine in mRNA = a pseudouridine in mRNA. Functionally, catalyzes pseudouridylation at position 35 in U2 snRNA stem-loop II region which induces particular conformation of the mRNA-U2 snRNA duplex and places the nucleophile in an accessible position for the first step of splicing. Also catalyzes pseudouridylation at position 56 in U2 snRNA. Also catalyzes pseudouridylation at position 50 in 5S rRNA, position 13 in cytoplasmic tRNAs, and position 35 in pre-tRNA(Tyr). Pseudouridine residues in tRNAs may stabilize the local RNA conformation, favor interactions with protein partners and play an important role in the stabilization of the codon-anticodon interaction with mRNA. Also catalyzes pseudouridylation of mRNAs in response to heat shock: mediates pseudouridylation of mRNAs with the consensus sequence 5'-UGUAR-3'. This chain is Multisubstrate pseudouridine synthase 7 (pus7), found in Schizosaccharomyces pombe (strain 972 / ATCC 24843) (Fission yeast).